The following is a 97-amino-acid chain: Putative pterin-4-alpha-carbinolamine dehydratase (97 aa).

Belongs to the pterin-4-alpha-carbinolamine dehydratase family.

It carries out the reaction (4aS,6R)-4a-hydroxy-L-erythro-5,6,7,8-tetrahydrobiopterin = (6R)-L-erythro-6,7-dihydrobiopterin + H2O. The polypeptide is Putative pterin-4-alpha-carbinolamine dehydratase (Phenylobacterium zucineum (strain HLK1)).